The primary structure comprises 151 residues: Small ribosomal subunit protein uS11 (151 aa).

The protein belongs to the universal ribosomal protein uS11 family.

This is Small ribosomal subunit protein uS11 (RPS14) from Podocoryna carnea (Hydrozoan).